The sequence spans 151 residues: Methylglyoxal synthase (151 aa).

One can recognise an MGS-like domain in the interval 6–151; sequence RVMPAHKHIA…DYDAYLAERV (146 aa). Residues histidine 19, lysine 23, 45 to 48, and 65 to 66 contribute to the substrate site; these read TGTT and SG. The active-site Proton donor/acceptor is the aspartate 71. Residue histidine 98 participates in substrate binding.

Belongs to the methylglyoxal synthase family.

The catalysed reaction is dihydroxyacetone phosphate = methylglyoxal + phosphate. Functionally, catalyzes the formation of methylglyoxal from dihydroxyacetone phosphate. The sequence is that of Methylglyoxal synthase from Aliivibrio fischeri (strain ATCC 700601 / ES114) (Vibrio fischeri).